Reading from the N-terminus, the 313-residue chain is Protoheme IX farnesyltransferase (313 aa).

The next 8 membrane-spanning stretches (helical) occupy residues 34–54 (VIEL…RGTV), 56–76 (PLLI…ANTL), 105–125 (HALI…WSTT), 128–148 (LSAH…TLLL), 152–172 (TSQN…IGWS), 173–193 (AVTG…FFWT), 237–257 (VLAT…VAIL), and 291–311 (YLAV…PTLL).

The protein belongs to the UbiA prenyltransferase family. Protoheme IX farnesyltransferase subfamily.

It localises to the cell membrane. The enzyme catalyses heme b + (2E,6E)-farnesyl diphosphate + H2O = Fe(II)-heme o + diphosphate. Its pathway is porphyrin-containing compound metabolism; heme O biosynthesis; heme O from protoheme: step 1/1. In terms of biological role, converts heme B (protoheme IX) to heme O by substitution of the vinyl group on carbon 2 of heme B porphyrin ring with a hydroxyethyl farnesyl side group. The sequence is that of Protoheme IX farnesyltransferase from Mycolicibacterium gilvum (strain PYR-GCK) (Mycobacterium gilvum (strain PYR-GCK)).